A 403-amino-acid polypeptide reads, in one-letter code: Cell cycle checkpoint control protein RAD9B (403 aa).

Positions 285-347 are disordered; the sequence is PLSQARRSHP…ASAGQDDIFE (63 aa). Phosphoserine is present on residues Ser-354 and Ser-363.

The protein belongs to the rad9 family. In terms of assembly, interacts with HUS1, HUS1B, RAD1, RAD9A and RAD17.

The protein is Cell cycle checkpoint control protein RAD9B (Rad9b) of Mus musculus (Mouse).